The sequence spans 327 residues: DNA-directed RNA polymerase subunit alpha (327 aa).

Residues 1–227 (MLIAHRPTLI…ELFGLARELN (227 aa)) are alpha N-terminal domain (alpha-NTD). Residues 244–327 (SDEDLRIPIE…GSYFDPNYGS (84 aa)) are alpha C-terminal domain (alpha-CTD).

It belongs to the RNA polymerase alpha chain family. In terms of assembly, homodimer. The RNAP catalytic core consists of 2 alpha, 1 beta, 1 beta' and 1 omega subunit. When a sigma factor is associated with the core the holoenzyme is formed, which can initiate transcription.

The catalysed reaction is RNA(n) + a ribonucleoside 5'-triphosphate = RNA(n+1) + diphosphate. Its function is as follows. DNA-dependent RNA polymerase catalyzes the transcription of DNA into RNA using the four ribonucleoside triphosphates as substrates. This chain is DNA-directed RNA polymerase subunit alpha, found in Tropheryma whipplei (strain TW08/27) (Whipple's bacillus).